The following is a 259-amino-acid chain: Insulin-like growth factor-binding protein 4 (259 aa).

A signal peptide spans 1-22; it reads MLPLCLVAALLLSASGPRPSLG. The region spanning 24 to 104 is the IGFBP N-terminal domain; sequence EAIHCPPCSE…MHGQGLCMEL (81 aa). 6 cysteine pairs are disulfide-bonded: Cys28–Cys54, Cys31–Cys56, Cys39–Cys57, Cys45–Cys60, Cys68–Cys81, and Cys75–Cys101. The tract at residues 115-136 is disordered; sequence QPSDKDEGDHPNNSFSPCSPQD. Asn126 carries N-linked (GlcNAc...) asparagine glycosylation. 4 disulfide bridges follow: Cys132-Cys139, Cys175-Cys205, Cys216-Cys227, and Cys229-Cys250. In terms of domain architecture, Thyroglobulin type-1 spans 172–250; it reads QGSCQSELHR…GLEPKGELDC (79 aa). A Phosphoserine modification is found at Ser256.

As to quaternary structure, binds IGF2 more than IGF1.

The protein resides in the secreted. Functionally, IGF-binding proteins prolong the half-life of the IGFs and have been shown to either inhibit or stimulate the growth promoting effects of the IGFs on cell culture. They alter the interaction of IGFs with their cell surface receptors. In Sus scrofa (Pig), this protein is Insulin-like growth factor-binding protein 4 (IGFBP4).